The chain runs to 247 residues: Ribosomal RNA small subunit methyltransferase G (247 aa).

S-adenosyl-L-methionine is bound by residues glycine 84, phenylalanine 89, 136 to 137, and arginine 155; that span reads AE.

Belongs to the methyltransferase superfamily. RNA methyltransferase RsmG family.

It localises to the cytoplasm. Its function is as follows. Specifically methylates the N7 position of a guanine in 16S rRNA. The protein is Ribosomal RNA small subunit methyltransferase G of Prochlorococcus marinus (strain MIT 9303).